The chain runs to 922 residues: Isoleucine--tRNA ligase (922 aa).

The short motif at 57-67 is the 'HIGH' region element; it reads PYANGDIHMGH. Glutamate 553 contacts L-isoleucyl-5'-AMP. The 'KMSKS' region signature appears at 594-598; the sequence is KMSKS. Position 597 (lysine 597) interacts with ATP. Residues cysteine 889, cysteine 892, cysteine 909, and cysteine 912 each contribute to the Zn(2+) site.

Belongs to the class-I aminoacyl-tRNA synthetase family. IleS type 1 subfamily. Monomer. Requires Zn(2+) as cofactor.

The protein localises to the cytoplasm. It catalyses the reaction tRNA(Ile) + L-isoleucine + ATP = L-isoleucyl-tRNA(Ile) + AMP + diphosphate. Functionally, catalyzes the attachment of isoleucine to tRNA(Ile). As IleRS can inadvertently accommodate and process structurally similar amino acids such as valine, to avoid such errors it has two additional distinct tRNA(Ile)-dependent editing activities. One activity is designated as 'pretransfer' editing and involves the hydrolysis of activated Val-AMP. The other activity is designated 'posttransfer' editing and involves deacylation of mischarged Val-tRNA(Ile). The polypeptide is Isoleucine--tRNA ligase (Bacillus licheniformis (strain ATCC 14580 / DSM 13 / JCM 2505 / CCUG 7422 / NBRC 12200 / NCIMB 9375 / NCTC 10341 / NRRL NRS-1264 / Gibson 46)).